The sequence spans 189 residues: Elongation factor P (189 aa).

Residue K34 is modified to N6-(3,6-diaminohexanoyl)-5-hydroxylysine.

The protein belongs to the elongation factor P family. In terms of processing, may be beta-lysylated on the epsilon-amino group of Lys-34 by the combined action of EpmA and EpmB, and then hydroxylated on the C5 position of the same residue by EpmC (if this protein is present). Lysylation is critical for the stimulatory effect of EF-P on peptide-bond formation. The lysylation moiety may extend toward the peptidyltransferase center and stabilize the terminal 3-CCA end of the tRNA. Hydroxylation of the C5 position on Lys-34 may allow additional potential stabilizing hydrogen-bond interactions with the P-tRNA.

The protein resides in the cytoplasm. It functions in the pathway protein biosynthesis; polypeptide chain elongation. In terms of biological role, involved in peptide bond synthesis. Alleviates ribosome stalling that occurs when 3 or more consecutive Pro residues or the sequence PPG is present in a protein, possibly by augmenting the peptidyl transferase activity of the ribosome. Modification of Lys-34 is required for alleviation. The chain is Elongation factor P from Halorhodospira halophila (strain DSM 244 / SL1) (Ectothiorhodospira halophila (strain DSM 244 / SL1)).